The chain runs to 500 residues: Probable malate:quinone oxidoreductase (500 aa).

It belongs to the MQO family. FAD serves as cofactor.

The catalysed reaction is (S)-malate + a quinone = a quinol + oxaloacetate. The protein operates within carbohydrate metabolism; tricarboxylic acid cycle; oxaloacetate from (S)-malate (quinone route): step 1/1. The chain is Probable malate:quinone oxidoreductase from Gluconobacter oxydans (strain 621H) (Gluconobacter suboxydans).